A 445-amino-acid polypeptide reads, in one-letter code: UPF0210 protein Sez_0396 (445 aa).

This sequence belongs to the UPF0210 family. Homodimer.

The chain is UPF0210 protein Sez_0396 from Streptococcus equi subsp. zooepidemicus (strain MGCS10565).